We begin with the raw amino-acid sequence, 510 residues long: Histone deacetylase 3 (510 aa).

Residues Arg24–Gly338 are histone deacetylase. His158 (proton donor/acceptor) is an active-site residue. Asp193, His195, and Asp281 together coordinate Zn(2+). The interval Pro394–Lys510 is disordered. Composition is skewed to basic and acidic residues over residues Asp418–Pro434 and Val448–Pro472. Positions Ala485–Asn503 are enriched in low complexity.

The protein belongs to the histone deacetylase family. HD Type 1 subfamily. It depends on Zn(2+) as a cofactor. In terms of tissue distribution, expressed in roots.

It localises to the nucleus. It carries out the reaction N(6)-acetyl-L-lysyl-[histone] + H2O = L-lysyl-[histone] + acetate. Responsible for the deacetylation of lysine residues on the N-terminal part of the core histones (H2A, H2B, H3 and H4). Histone deacetylation gives a tag for epigenetic repression and plays an important role in transcriptional regulation, cell cycle progression and developmental events. Histone deacetylases act via the formation of large multiprotein complexes. The chain is Histone deacetylase 3 from Oryza sativa subsp. japonica (Rice).